The primary structure comprises 348 residues: Histone PARylation factor 1 (348 aa).

Basic residues predominate over residues 1–10 (MAGRGKRKPR). The interval 1–38 (MAGRGKRKPRSLPQTETPNGEVKKAKEGLKDDKTSVGE) is disordered. Residues 21 to 38 (EVKKAKEGLKDDKTSVGE) are compositionally biased toward basic and acidic residues. The stretch at 170–200 (LQKKKKEKRQQKDDAALNRLEEDLKREAERL) forms a coiled coil. Glutamate 285 functions as the Proton donor in the catalytic mechanism.

Belongs to the HPF1 family. Interacts with PARP1 (via the PARP catalytic domain). Interacts with PARP2 (via the PARP catalytic domain). Interacts with core nucleosomes in a parp1- and parp2-dependent manner. As to expression, in adult, mainly expressed in gonads.

It localises to the chromosome. The protein localises to the nucleus. Its function is as follows. Cofactor for serine ADP-ribosylation that confers serine specificity on parp1 and parp2 and plays a key role in DNA damage response. Initiates the repair of double-strand DNA breaks: recruited to DNA damage sites by parp1 and parp2 and switches the amino acid specificity of parp1 and parp2 from aspartate or glutamate to serine residues, licensing serine ADP-ribosylation of target proteins. Serine ADP-ribosylation of target proteins, such as histones, promotes decompaction of chromatin and the recruitment of repair factors leading to the reparation of DNA strand breaks. Serine ADP-ribosylation of proteins constitutes the primary form of ADP-ribosylation of proteins in response to DNA damage. Hpf1 acts by completing the active site of parp1 and parp2: forms a composite active site composed of residues from Hpf1 and parp1 or parp2. While hpf1 promotes the initiation of serine ADP-ribosylation, it restricts the polymerase activity of parp1 and parp2 in order to limit the length of poly-ADP-ribose chains. Hpf1 also promotes tyrosine ADP-ribosylation, probably by conferring tyrosine specificity on parp1. The sequence is that of Histone PARylation factor 1 from Danio rerio (Zebrafish).